Here is a 227-residue protein sequence, read N- to C-terminus: PKHD-type hydroxylase NE2125 (227 aa).

The Fe2OG dioxygenase domain maps to 78-179 (KIVPPFFNRY…RLACFMFIQS (102 aa)). 3 residues coordinate Fe cation: His-97, Asp-99, and His-160. Arg-170 contributes to the 2-oxoglutarate binding site.

Requires Fe(2+) as cofactor. L-ascorbate is required as a cofactor.

The protein is PKHD-type hydroxylase NE2125 of Nitrosomonas europaea (strain ATCC 19718 / CIP 103999 / KCTC 2705 / NBRC 14298).